Here is a 139-residue protein sequence, read N- to C-terminus: mRNA stability protein mug134 (139 aa).

Positions 83-139 (IGKEIPSPDTIPHRVVSAGSPNKEPSLHTKRPSESSPSGASSRRESVTRHDLESNEN) are disordered. Residues 124–139 (SRRESVTRHDLESNEN) show a composition bias toward basic and acidic residues.

This sequence belongs to the endosulfine family.

It is found in the nucleus. The protein localises to the cytoplasm. Plays an essential role in initiation of the G0 program by preventing the degradation of specific nutrient-regulated mRNAs via the 5'-3' mRNA decay pathway. In Schizosaccharomyces pombe (strain 972 / ATCC 24843) (Fission yeast), this protein is mRNA stability protein mug134 (mug134).